The chain runs to 509 residues: Tyrosine-protein kinase Lck (509 aa).

A lipid anchor (N-myristoyl glycine) is attached at G2. The interactions with CD4 and CD8 stretch occupies residues 2 to 72 (GCGCSSHPED…DNLVIALHSY (71 aa)). 2 S-palmitoyl cysteine lipidation sites follow: C3 and C5. Residues 61-121 (LQDNLVIALH…PFNFVAKANS (61 aa)) form the SH3 domain. K99 participates in a covalent cross-link: Glycyl lysine isopeptide (Lys-Gly) (interchain with G-Cter in ubiquitin). S102 carries the phosphoserine modification. The SH2 domain maps to 127–224 (WFFKNLSRKD…GLCTRLSRPC (98 aa)). The interaction with PTPRH stretch occupies residues 154–242 (RESESTAGSF…WWEDEWEVPR (89 aa)). T159 carries the post-translational modification Phosphothreonine. A Phosphoserine modification is found at S162. A Phosphotyrosine modification is found at Y192. A Phosphoserine modification is found at S194. In terms of domain architecture, Protein kinase spans 245–498 (LKLVERLGAG…YLRSVLEDFF (254 aa)). ATP-binding positions include 251-259 (LGAGQFGEV) and K273. Residue K276 forms a Glycyl lysine isopeptide (Lys-Gly) (interchain with G-Cter in ubiquitin) linkage. D364 functions as the Proton acceptor in the catalytic mechanism. Position 394 is a phosphotyrosine; by autocatalysis (Y394). Y505 is modified (phosphotyrosine; by CSK).

The protein belongs to the protein kinase superfamily. Tyr protein kinase family. SRC subfamily. As to quaternary structure, binds to the cytoplasmic domain of cell surface receptors, such as AXL, CD2, CD4, CD5, CD8, CD44, CD45 and CD122. Also binds to effector molecules, such as PI4K, VAV1, RASA1, FYB1 and to other protein kinases including CDK1, RAF1, ZAP70 and SYK. Binds to phosphatidylinositol 3'-kinase (PI3K) from T-lymphocytes through its SH3 domain and to the tyrosine phosphorylated form of KHDRBS1/p70 through its SH2 domain. Interacts with SQSTM1. Interacts with phosphorylated LIME1. LIME1. Interacts with CBLB and PTPRH. Interacts with RUNX3. Forms a signaling complex with EPHA1, PTK2B and PI3-KINASE; upon activation by EFNA1 which may regulate T-lymphocytes migration. Associates with ZAP70 and RHOH; these interactions allow LCK-mediated RHOH and CD3 subunit phosphorylation in the presence of functional ZAP70. Interacts with CEACAM1 (via cytoplasmic domain); mediates CEACAM1 phosphorylation resulting in PTPN6 recruitment that dephosphorylates TCR stimulation-induced CD247 and ZAP70. Interacts with CD160. Interacts with CD48. Autophosphorylated on Tyr-394, increasing enzymatic activity, this site is dephosphorylated by PTN22. Phosphorylated on Tyr-505 by CSK, decreasing activity. Dephosphorylated by PTPRC/CD45. Dephosphorylation at Tyr-394 by PTPN2 negatively regulates T-cells differentiation. Dephosphorylation at Tyr-394 by DUSP22 negatively regulates T-cell receptor signaling. In terms of processing, myristoylation is required prior to palmitoylation. Post-translationally, palmitoylation regulates association with the plasma membrane and could be mediated by ZDHHC2. 'Lys-63'-linked ubiquitinated at Lys-99 and Lys-276 by UBR2; this modification is required for autophosphorylation at Tyr-394.

It is found in the cell membrane. The protein resides in the cytoplasm. Its subcellular location is the cytosol. The catalysed reaction is L-tyrosyl-[protein] + ATP = O-phospho-L-tyrosyl-[protein] + ADP + H(+). With respect to regulation, the relative activities of the inhibitory tyrosine-protein kinase CSK and the activating tyrosine-protein phosphatase PTPRC/CD45 determine the level of LCK activity. These interactions allow rapid and efficient activation of LCK in response to TCR stimulation. Its function is as follows. Non-receptor tyrosine-protein kinase that plays an essential role in the selection and maturation of developing T-cells in the thymus and in the function of mature T-cells. Plays a key role in T-cell antigen receptor (TCR)-linked signal transduction pathways. Constitutively associated with the cytoplasmic portions of the CD4 and CD8 surface receptors. Association of the TCR with a peptide antigen-bound MHC complex facilitates the interaction of CD4 and CD8 with MHC class II and class I molecules, respectively, thereby recruiting the associated LCK protein to the vicinity of the TCR/CD3 complex. LCK then phosphorylates tyrosine residues within the immunoreceptor tyrosine-based activation motifs (ITAM) of the cytoplasmic tails of the TCR-gamma chains and CD3 subunits, initiating the TCR/CD3 signaling pathway. Once stimulated, the TCR recruits the tyrosine kinase ZAP70, that becomes phosphorylated and activated by LCK. Following this, a large number of signaling molecules are recruited, ultimately leading to lymphokine production. LCK also contributes to signaling by other receptor molecules. Associates directly with the cytoplasmic tail of CD2, which leads to hyperphosphorylation and activation of LCK. Also plays a role in the IL2 receptor-linked signaling pathway that controls the T-cell proliferative response. Binding of IL2 to its receptor results in increased activity of LCK. Is expressed at all stages of thymocyte development and is required for the regulation of maturation events that are governed by both pre-TCR and mature alpha beta TCR. Phosphorylates other substrates including RUNX3, PTK2B/PYK2, the microtubule-associated protein MAPT, RHOH or TYROBP. Interacts with UNC119; this interaction plays a crucial role in activation of LCK. This is Tyrosine-protein kinase Lck (LCK) from Aotus nancymaae (Ma's night monkey).